We begin with the raw amino-acid sequence, 111 residues long: Large ribosomal subunit protein P2-2 (111 aa).

Residues Ala-86–Asp-111 are disordered.

Belongs to the eukaryotic ribosomal protein P1/P2 family. P1 and P2 exist as dimers at the large ribosomal subunit. Post-translationally, phosphorylated.

In terms of biological role, plays an important role in the elongation step of protein synthesis. In Leishmania infantum, this protein is Large ribosomal subunit protein P2-2 (LIP').